Consider the following 122-residue polypeptide: Large-conductance mechanosensitive channel (122 aa).

A run of 2 helical transmembrane segments spans residues 29–49 and 66–86; these read FGKI…GLIF and GVFI…FLFI.

This sequence belongs to the MscL family. As to quaternary structure, homopentamer.

It localises to the cell membrane. Functionally, channel that opens in response to stretch forces in the membrane lipid bilayer. May participate in the regulation of osmotic pressure changes within the cell. The sequence is that of Large-conductance mechanosensitive channel from Macrococcus caseolyticus (strain JCSC5402) (Macrococcoides caseolyticum).